The sequence spans 361 residues: Probable purine permease 13 (361 aa).

Transmembrane regions (helical) follow at residues 35-55, 68-88, 103-123, 129-151, 156-176, 192-212, 238-258, 268-288, 289-309, and 323-343; these read WILV…AVLL, WIST…LCFL, LVWI…LYSF, SAST…SYYI, ITCL…LVSL, LIGC…LSLM, VASC…LLSV, VIYV…SVGA, VALI…LSLI, and LTEV…FYIY.

The protein belongs to the purine permeases (TC 2.A.7.14) family.

It is found in the membrane. The protein is Probable purine permease 13 (PUP13) of Arabidopsis thaliana (Mouse-ear cress).